The sequence spans 186 residues: Elongation factor P (186 aa).

At lysine 33 the chain carries N6-(3,6-diaminohexanoyl)-5-hydroxylysine.

This sequence belongs to the elongation factor P family. Post-translationally, may be beta-lysylated on the epsilon-amino group of Lys-33 by the combined action of EpmA and EpmB, and then hydroxylated on the C5 position of the same residue by EpmC (if this protein is present). Lysylation is critical for the stimulatory effect of EF-P on peptide-bond formation. The lysylation moiety may extend toward the peptidyltransferase center and stabilize the terminal 3-CCA end of the tRNA. Hydroxylation of the C5 position on Lys-33 may allow additional potential stabilizing hydrogen-bond interactions with the P-tRNA.

It is found in the cytoplasm. Its pathway is protein biosynthesis; polypeptide chain elongation. Functionally, involved in peptide bond synthesis. Alleviates ribosome stalling that occurs when 3 or more consecutive Pro residues or the sequence PPG is present in a protein, possibly by augmenting the peptidyl transferase activity of the ribosome. Modification of Lys-33 is required for alleviation. In Acidithiobacillus ferrooxidans (strain ATCC 23270 / DSM 14882 / CIP 104768 / NCIMB 8455) (Ferrobacillus ferrooxidans (strain ATCC 23270)), this protein is Elongation factor P.